The following is a 161-amino-acid chain: Peroxynitrite isomerase (161 aa).

The GXWXGXG signature appears at 17–23 (GSWVGRG). H152 provides a ligand contact to heme b.

This sequence belongs to the nitrobindin family. As to quaternary structure, homodimer. Heme b serves as cofactor.

The enzyme catalyses peroxynitrite = nitrate. The protein operates within nitrogen metabolism. Heme-binding protein able to scavenge peroxynitrite and to protect free L-tyrosine against peroxynitrite-mediated nitration, by acting as a peroxynitrite isomerase that converts peroxynitrite to nitrate. Therefore, this protein likely plays a role in peroxynitrite sensing and in the detoxification of reactive nitrogen and oxygen species (RNS and ROS, respectively). Is able to bind nitric oxide (NO) in vitro, but may act as a sensor of peroxynitrite levels in vivo. The sequence is that of Peroxynitrite isomerase from Mycobacterium leprae (strain TN).